The following is a 242-amino-acid chain: Phosphoribosylaminoimidazole-succinocarboxamide synthase (242 aa).

Belongs to the SAICAR synthetase family.

It catalyses the reaction 5-amino-1-(5-phospho-D-ribosyl)imidazole-4-carboxylate + L-aspartate + ATP = (2S)-2-[5-amino-1-(5-phospho-beta-D-ribosyl)imidazole-4-carboxamido]succinate + ADP + phosphate + 2 H(+). Its pathway is purine metabolism; IMP biosynthesis via de novo pathway; 5-amino-1-(5-phospho-D-ribosyl)imidazole-4-carboxamide from 5-amino-1-(5-phospho-D-ribosyl)imidazole-4-carboxylate: step 1/2. The protein is Phosphoribosylaminoimidazole-succinocarboxamide synthase of Prochlorococcus marinus (strain MIT 9303).